A 196-amino-acid chain; its full sequence is ATP-dependent Clp protease proteolytic subunit (196 aa).

Residue serine 96 is the Nucleophile of the active site. Histidine 121 is a catalytic residue.

Belongs to the peptidase S14 family. As to quaternary structure, fourteen ClpP subunits assemble into 2 heptameric rings which stack back to back to give a disk-like structure with a central cavity, resembling the structure of eukaryotic proteasomes.

The protein resides in the cytoplasm. It catalyses the reaction Hydrolysis of proteins to small peptides in the presence of ATP and magnesium. alpha-casein is the usual test substrate. In the absence of ATP, only oligopeptides shorter than five residues are hydrolyzed (such as succinyl-Leu-Tyr-|-NHMec, and Leu-Tyr-Leu-|-Tyr-Trp, in which cleavage of the -Tyr-|-Leu- and -Tyr-|-Trp bonds also occurs).. In terms of biological role, cleaves peptides in various proteins in a process that requires ATP hydrolysis. Has a chymotrypsin-like activity. Plays a major role in the degradation of misfolded proteins. The chain is ATP-dependent Clp protease proteolytic subunit from Streptococcus gordonii (strain Challis / ATCC 35105 / BCRC 15272 / CH1 / DL1 / V288).